A 144-amino-acid polypeptide reads, in one-letter code: Urease accessory protein UreE (144 aa).

This sequence belongs to the UreE family.

It is found in the cytoplasm. Functionally, involved in urease metallocenter assembly. Binds nickel. Probably functions as a nickel donor during metallocenter assembly. The sequence is that of Urease accessory protein UreE from Thermosynechococcus vestitus (strain NIES-2133 / IAM M-273 / BP-1).